The chain runs to 633 residues: Extracellular metalloproteinase 5 (633 aa).

The signal sequence occupies residues 1–21; the sequence is MHGLLLAAAGLLSLPLHVVAH. Positions 22–245 are excised as a propeptide; the sequence is PQPSTSLAGR…HNVVDYVSHA (224 aa). A glycan (N-linked (GlcNAc...) asparagine) is linked at Asn-285. His-428 is a binding site for Zn(2+). Glu-429 is an active-site residue. His-432 is a Zn(2+) binding site. N-linked (GlcNAc...) asparagine glycosylation is found at Asn-592 and Asn-621.

Belongs to the peptidase M36 family. Requires Zn(2+) as cofactor.

Its subcellular location is the secreted. Its function is as follows. Secreted metalloproteinase probably acting as a virulence factor. The sequence is that of Extracellular metalloproteinase 5 (MEP5) from Trichophyton rubrum (Athlete's foot fungus).